The primary structure comprises 427 residues: Serine hydroxymethyltransferase (427 aa).

Residues Leu122 and 126-128 (GHL) each bind (6S)-5,6,7,8-tetrahydrofolate. Lys231 bears the N6-(pyridoxal phosphate)lysine mark. (6S)-5,6,7,8-tetrahydrofolate-binding positions include Glu247 and 355–357 (SPF).

This sequence belongs to the SHMT family. Homodimer. The cofactor is pyridoxal 5'-phosphate.

The protein localises to the cytoplasm. The catalysed reaction is (6R)-5,10-methylene-5,6,7,8-tetrahydrofolate + glycine + H2O = (6S)-5,6,7,8-tetrahydrofolate + L-serine. Its pathway is one-carbon metabolism; tetrahydrofolate interconversion. It functions in the pathway amino-acid biosynthesis; glycine biosynthesis; glycine from L-serine: step 1/1. Catalyzes the reversible interconversion of serine and glycine with tetrahydrofolate (THF) serving as the one-carbon carrier. This reaction serves as the major source of one-carbon groups required for the biosynthesis of purines, thymidylate, methionine, and other important biomolecules. Also exhibits THF-independent aldolase activity toward beta-hydroxyamino acids, producing glycine and aldehydes, via a retro-aldol mechanism. This Crocosphaera subtropica (strain ATCC 51142 / BH68) (Cyanothece sp. (strain ATCC 51142)) protein is Serine hydroxymethyltransferase.